Reading from the N-terminus, the 4011-residue chain is Hybrid PKS-NRPS synthetase mycA (4011 aa).

Residues 12–451 (NEPIAIIGSA…GANAHVILEN (440 aa)) form the Ketosynthase family 3 (KS3) domain. Active-site for beta-ketoacyl synthase activity residues include C185, H324, and H373. Positions 576–903 (VFTGQGAQWA…PYTGTLSRGS (328 aa)) are acyl transferase (AT) domain. The N-terminal hotdog fold stretch occupies residues 977 to 1113 (NPLLGRRIPD…GRVIVTLAGT (137 aa)). The PKS/mFAS DH domain maps to 977–1290 (NPLLGRRIPD…ITPLATRTGQ (314 aa)). The segment at 978-1287 (PLLGRRIPDG…GVRITPLATR (310 aa)) is dehydratase (DH) domain. Catalysis depends on H1009, which acts as the Proton acceptor; for dehydratase activity. The tract at residues 1135-1290 (TAEVREDEFY…ITPLATRTGQ (156 aa)) is C-terminal hotdog fold. D1195 acts as the Proton donor; for dehydratase activity in catalysis. Residues 1434–1626 (YYVEALGIRE…FSGIDTITPE (193 aa)) are methyltransferase (MT) domain. Residues 2138 to 2311 (TYVLFGLTSD…AASVLHLGAV (174 aa)) are ketoreductase (KR)domain. Residues 2429-2504 (DSFLQKLQIM…DLVAFAHEKL (76 aa)) form the Carrier 1 domain. Position 2464 is an O-(pantetheine 4'-phosphoryl)serine (S2464). Positions 2519–2607 (AAAAAAAERS…PREQDVERTA (89 aa)) are disordered. Residues 2559–2578 (PASSSTGSDHPTSVTSSGHT) are compositionally biased toward polar residues. Positions 2604–2975 (ERTAPMSLGQ…KPDSTLGSAP (372 aa)) are condensation. Residues 3009–3414 (IIQRNPDTIA…GELEILGRID (406 aa)) form an adenylation region. The segment at 3525-3544 (AKEEEEEKRPNGSSAAPLTQ) is disordered. A compositionally biased stretch (polar residues) spans 3535–3544 (NGSSAAPLTQ). Positions 3541–3621 (PLTQQELQLR…AMAAAVHDAA (81 aa)) constitute a Carrier 2 domain. S3581 bears the O-(pantetheine 4'-phosphoryl)serine mark. Residues 3671–3978 (VVILTGATGF…RTVPLGQWIE (308 aa)) form a reductase-like region.

This sequence in the C-terminal section; belongs to the NRP synthetase family.

The catalysed reaction is L-leucine + 8 malonyl-CoA + 4 S-adenosyl-L-methionine + ATP + 9 NADPH + 12 H(+) = (5S)-5-(2-methylpropyl)-3-[(2E,6R,8E,10E,12E)-6,8,10,12-tetramethyltetradeca-2,8,10,12-tetraenoyl]-2,5-dihydro-1H-pyrrol-2-one + AMP + 4 S-adenosyl-L-homocysteine + 8 CO2 + diphosphate + 9 NADP(+) + 8 CoA + 7 H2O. It functions in the pathway mycotoxin biosynthesis. In terms of biological role, hybrid PKS-NRPS synthetase; part of the gene cluster that mediates the biosynthesis of myceliothermophins, mycotoxins that contain a trans-fused decalin ring system connected to a conjugated 3-pyrrolin-2-one moiety and that have potential anti-tumor properties. The polyketide synthase module (PKS) of the PKS-NRPS mycA is responsible for the synthesis of the octaketide backbone. The downstream nonribosomal peptide synthetase (NRPS) module then amidates the carboxyl end of the octaketide with a leucine. A reductase-like domain (R) at the C-terminus catalyzes the reductive release of the polyketide-amino acid intermediate. Because mycA lacks a designated enoylreductase (ER) domain, the required activity is provided the enoyl reductase mycC. Following mycA-catalyzed construction and release of aminoacyl polyketide aldehyde, Knoevenagel condensation yields the expected ketone. This C18 keto acyclic precursor is the substrate of the Diels-Alderase mycB, that catalyzes the Diels-Alder cycloaddition to produce myceliothermophin E. A yet unknown oxygenase involved in the production of myceliothermophin A, via substitution with a hydroxyl group at the C21, has still to be identified. This Thermothelomyces thermophilus (strain ATCC 42464 / BCRC 31852 / DSM 1799) (Sporotrichum thermophile) protein is Hybrid PKS-NRPS synthetase mycA.